Consider the following 194-residue polypeptide: MSLQTVVEDIRDEARARAQEISDAADERAEEIIADAEADADQIREEREAEVERTIEQEREQRLSSAKLEAKQARLNARRDILEDVHGDVEDALAALEGDRREELTRALLDAAVDEFDDSDELSVYGRASDQSLLEDVLDDYDGATYAGERDCLGGVVVESNESRVRVNNTFDSILEDVWEDNLKAISDRLFEDQ.

The interval 35–56 is disordered; that stretch reads DAEADADQIREEREAEVERTIE. The segment covering 41 to 56 has biased composition (basic and acidic residues); the sequence is DQIREEREAEVERTIE.

This sequence belongs to the V-ATPase E subunit family. Has multiple subunits with at least A(3), B(3), C, D, E, F, H, I and proteolipid K(x).

It localises to the cell membrane. In terms of biological role, component of the A-type ATP synthase that produces ATP from ADP in the presence of a proton gradient across the membrane. In Haloarcula marismortui (strain ATCC 43049 / DSM 3752 / JCM 8966 / VKM B-1809) (Halobacterium marismortui), this protein is A-type ATP synthase subunit E.